A 280-amino-acid polypeptide reads, in one-letter code: Fe-S cluster assembly protein DRE2 (280 aa).

An N-terminal SAM-like domain region spans residues Met-1–Gly-121. The segment at Pro-122 to Leu-176 is linker. Cys-186, Cys-198, Cys-201, and Cys-203 together coordinate [2Fe-2S] cluster. Positions Cys-186 to Cys-203 are fe-S binding site A. Positions 244, 247, 255, and 258 each coordinate [4Fe-4S] cluster. 2 consecutive short sequence motifs (cx2C motif) follow at residues Cys-244–Cys-247 and Cys-255–Cys-258. Residues Cys-244–Cys-258 form a fe-S binding site B region.

This sequence belongs to the anamorsin family. As to quaternary structure, monomer. Interacts with TAH18. Interacts with MIA40. It depends on [2Fe-2S] cluster as a cofactor. [4Fe-4S] cluster serves as cofactor.

Its subcellular location is the cytoplasm. The protein localises to the mitochondrion intermembrane space. Its function is as follows. Component of the cytosolic iron-sulfur (Fe-S) protein assembly (CIA) machinery required for the maturation of extramitochondrial Fe-S proteins. Part of an electron transfer chain functioning in an early step of cytosolic Fe-S biogenesis, facilitating the de novo assembly of a [4Fe-4S] cluster on the scaffold complex CFD1-NBP35. Electrons are transferred to DRE2 from NADPH via the FAD- and FMN-containing protein TAH18. TAH18-DRE2 are also required for the assembly of the diferric tyrosyl radical cofactor of ribonucleotide reductase (RNR), probably by providing electrons for reduction during radical cofactor maturation in the catalytic small subunit RNR2. This is Fe-S cluster assembly protein DRE2 from Yarrowia lipolytica (strain CLIB 122 / E 150) (Yeast).